We begin with the raw amino-acid sequence, 203 residues long: Amelogenin, Y isoform (203 aa).

Residues 1–16 (MGTWILFACLVGAAFA) form the signal peptide. A disordered region spans residues 116–180 (MPVPGQQSMT…PPLPPMFPMR (65 aa)). Residues 120–130 (GQQSMTPTQHH) show a composition bias toward polar residues. Positions 131–142 (QPNLPLPAQQPF) are enriched in low complexity. The span at 143-180 (QPQPVQPLPHQPMQPQPPVQPMQPLLPQPPLPPMFPMR) shows a compositional bias: pro residues.

It belongs to the amelogenin family.

Its subcellular location is the secreted. The protein resides in the extracellular space. The protein localises to the extracellular matrix. Its function is as follows. Plays a role in biomineralization. Seems to regulate the formation of crystallites during the secretory stage of tooth enamel development. Thought to play a major role in the structural organization and mineralization of developing enamel. This chain is Amelogenin, Y isoform (AMELY), found in Pan troglodytes (Chimpanzee).